The primary structure comprises 151 residues: FUN14 domain-containing protein 1 (151 aa).

A YXXL motif is present at residues 14–17 (YEVL). A run of 3 helical transmembrane segments spans residues 44 to 64 (YSVA…GFLF), 71 to 91 (AATA…GGYI), and 130 to 150 (FIKK…LGLA).

This sequence belongs to the FUN14 family.

The protein resides in the mitochondrion outer membrane. In terms of biological role, acts as an activator of hypoxia-induced mitophagy, an important mechanism for mitochondrial quality control. In Xenopus tropicalis (Western clawed frog), this protein is FUN14 domain-containing protein 1 (fundc1).